Here is a 33-residue protein sequence, read N- to C-terminus: Photosystem II reaction center protein Psb30 (33 aa).

The helical transmembrane segment at 8-28 (QLTALAFIVLSGPLVIALLAF) threads the bilayer.

The protein belongs to the Psb30/Ycf12 family. As to quaternary structure, PSII is composed of 1 copy each of membrane proteins PsbA, PsbB, PsbC, PsbD, PsbE, PsbF, PsbH, PsbI, PsbJ, PsbK, PsbL, PsbM, PsbT, PsbX, PsbY, PsbZ, Psb30/Ycf12, peripheral proteins of the oxygen-evolving complex and a large number of cofactors. It forms dimeric complexes.

The protein localises to the plastid. It is found in the chloroplast thylakoid membrane. Its function is as follows. A core subunit of photosystem II (PSII), probably helps stabilize the reaction center. The protein is Photosystem II reaction center protein Psb30 of Staurastrum punctulatum (Green alga).